A 319-amino-acid chain; its full sequence is Ribosomal RNA small subunit methyltransferase H (319 aa).

S-adenosyl-L-methionine is bound by residues 39 to 41 (GGH), D59, F83, D104, and Q111.

The protein belongs to the methyltransferase superfamily. RsmH family.

The protein localises to the cytoplasm. It carries out the reaction cytidine(1402) in 16S rRNA + S-adenosyl-L-methionine = N(4)-methylcytidine(1402) in 16S rRNA + S-adenosyl-L-homocysteine + H(+). Functionally, specifically methylates the N4 position of cytidine in position 1402 (C1402) of 16S rRNA. The polypeptide is Ribosomal RNA small subunit methyltransferase H (Ralstonia pickettii (strain 12J)).